Reading from the N-terminus, the 166-residue chain is Putative peroxiredoxin (166 aa).

The 166-residue stretch at glutamate 1–leucine 166 folds into the Thioredoxin domain. Cysteine 56 serves as the catalytic Cysteine sulfenic acid (-SOH) intermediate. Residues serine 164–leucine 166 carry the Microbody targeting signal motif.

The protein belongs to the peroxiredoxin family. Prx5 subfamily. In terms of assembly, homodimer; disulfide-linked, upon oxidation.

It carries out the reaction a hydroperoxide + [thioredoxin]-dithiol = an alcohol + [thioredoxin]-disulfide + H2O. In terms of biological role, thiol-specific peroxidase that catalyzes the reduction of hydrogen peroxide and organic hydroperoxides to water and alcohols, respectively. Plays a role in cell protection against oxidative stress by detoxifying peroxides and as sensor of hydrogen peroxide-mediated signaling events. This is Putative peroxiredoxin from Malassezia furfur (Pityriasis versicolor infection agent).